Here is a 422-residue protein sequence, read N- to C-terminus: L-threonine dehydratase biosynthetic IlvA (422 aa).

Lys60 carries the post-translational modification N6-(pyridoxal phosphate)lysine. Residues Asn87, 190 to 194 (GGGGL), and Ser315 each bind pyridoxal 5'-phosphate. One can recognise an ACT-like domain in the interval 339-413 (HYFIVNFPQR…KPFHYVEVNK (75 aa)).

This sequence belongs to the serine/threonine dehydratase family. In terms of assembly, homotetramer. Pyridoxal 5'-phosphate is required as a cofactor.

The catalysed reaction is L-threonine = 2-oxobutanoate + NH4(+). Its pathway is amino-acid biosynthesis; L-isoleucine biosynthesis; 2-oxobutanoate from L-threonine: step 1/1. Its function is as follows. Catalyzes the anaerobic formation of alpha-ketobutyrate and ammonia from threonine in a two-step reaction. The first step involved a dehydration of threonine and a production of enamine intermediates (aminocrotonate), which tautomerizes to its imine form (iminobutyrate). Both intermediates are unstable and short-lived. The second step is the nonenzymatic hydrolysis of the enamine/imine intermediates to form 2-ketobutyrate and free ammonia. In the low water environment of the cell, the second step is accelerated by RidA. This Bacillus subtilis (strain 168) protein is L-threonine dehydratase biosynthetic IlvA (ilvA).